We begin with the raw amino-acid sequence, 359 residues long: MKTLNLDLQEKSYPIYIGQDLLSEGKLLTKHISGKQVMIVTNTTVAPLYLEKVQNLLLSFEFAQVILPDGEKYKTLDTLNCIFNALLKNRFDRSCTLIALGGGVVGDMTGFAAASYQRGVNFIQIPTTLLSQVDSSVGGKTGINHVLGKNMIGIFHQPKCVLIDIDTLDTLNNQQYSAGMAEVIKYGLLGHLNFFNFLQENIRDLMDRNKPLMAEIIYQSCQYKINIVVQDELEVGKRALLNLGHTFGHVIENILGYGIFLHGEAISVGMLMAVKLSHLEGYLSINQVAQVQDLLEKANLPIFIIGKISASDFMKVMLVDKKVINGNIRLILLKELGHAFVCNHYKDQLLNQVINEFCQ.

Residues 69-74 (DGEKYK), 103-107 (GVVGD), 127-128 (TT), Lys140, Lys149, and 167-170 (TLDT) contribute to the NAD(+) site. Glu182, His245, and His262 together coordinate Zn(2+).

The protein belongs to the sugar phosphate cyclases superfamily. Dehydroquinate synthase family. Co(2+) is required as a cofactor. The cofactor is Zn(2+). NAD(+) serves as cofactor.

It is found in the cytoplasm. It catalyses the reaction 7-phospho-2-dehydro-3-deoxy-D-arabino-heptonate = 3-dehydroquinate + phosphate. Its pathway is metabolic intermediate biosynthesis; chorismate biosynthesis; chorismate from D-erythrose 4-phosphate and phosphoenolpyruvate: step 2/7. Catalyzes the conversion of 3-deoxy-D-arabino-heptulosonate 7-phosphate (DAHP) to dehydroquinate (DHQ). The sequence is that of 3-dehydroquinate synthase from Ruthia magnifica subsp. Calyptogena magnifica.